The following is a 411-amino-acid chain: Methylthioribose-1-phosphate isomerase (411 aa).

Ser2 carries the post-translational modification N-acetylserine. Asp280 serves as the catalytic Proton donor. Ser351 is subject to Phosphoserine.

This sequence belongs to the eIF-2B alpha/beta/delta subunits family. MtnA subfamily. As to quaternary structure, homodimer.

It is found in the cytoplasm. The protein resides in the nucleus. The enzyme catalyses 5-(methylsulfanyl)-alpha-D-ribose 1-phosphate = 5-(methylsulfanyl)-D-ribulose 1-phosphate. The protein operates within amino-acid biosynthesis; L-methionine biosynthesis via salvage pathway; L-methionine from S-methyl-5-thio-alpha-D-ribose 1-phosphate: step 1/6. Functionally, catalyzes the interconversion of methylthioribose-1-phosphate (MTR-1-P) into methylthioribulose-1-phosphate (MTRu-1-P). The chain is Methylthioribose-1-phosphate isomerase from Saccharomyces cerevisiae (strain RM11-1a) (Baker's yeast).